We begin with the raw amino-acid sequence, 20 residues long: Putative serine protease (20 aa).

Belongs to the peptidase S1 family.

The protein localises to the secreted. Its function is as follows. Binds the A.niger cell wall component alpha-1,3-glucan, a fungal pathogen-associated molecular pattern (PAMP) that activates the host immune response. The chain is Putative serine protease from Galleria mellonella (Greater wax moth).